The chain runs to 292 residues: Ribosomal protein L11 methyltransferase (292 aa).

S-adenosyl-L-methionine is bound by residues Thr-144, Gly-165, Asp-187, and Asn-229.

This sequence belongs to the methyltransferase superfamily. PrmA family.

The protein resides in the cytoplasm. It carries out the reaction L-lysyl-[protein] + 3 S-adenosyl-L-methionine = N(6),N(6),N(6)-trimethyl-L-lysyl-[protein] + 3 S-adenosyl-L-homocysteine + 3 H(+). Functionally, methylates ribosomal protein L11. In Pseudomonas putida (strain GB-1), this protein is Ribosomal protein L11 methyltransferase.